Reading from the N-terminus, the 467-residue chain is Dimethylamine methyltransferase MtbB3 (467 aa).

Position 356 (Pyl-356) is a non-standard amino acid, pyrrolysine.

This sequence belongs to the dimethylamine methyltransferase family.

It carries out the reaction Co(I)-[dimethylamine-specific corrinoid protein] + dimethylamine + H(+) = methyl-Co(III)-[dimethylamine-specific corrinoid protein] + methylamine. Its pathway is one-carbon metabolism; methanogenesis from dimethylamine. Its function is as follows. Catalyzes the transfer of a methyl group from dimethylamine to the corrinoid cofactor of MtbC. In Methanosarcina acetivorans (strain ATCC 35395 / DSM 2834 / JCM 12185 / C2A), this protein is Dimethylamine methyltransferase MtbB3 (mtbB3).